We begin with the raw amino-acid sequence, 597 residues long: Cytosolic phospholipase A2 gamma (597 aa).

In terms of domain architecture, PLA2c spans 1 to 597 (MELSSGVCPA…FKKSHNISKD (597 aa)). Catalysis depends on serine 83, which acts as the Nucleophile. Catalysis depends on aspartate 417, which acts as the Proton acceptor. Residues 576 to 597 (RVKDPQGSQTVEFKKSHNISKD) are disordered. The segment covering 587 to 597 (EFKKSHNISKD) has biased composition (basic and acidic residues).

Highly expressed in ovary, where it localizes to oocytes in preantral and antral stage follicles (at protein level). Not detected in other tissues tested.

The protein resides in the nucleus. Its subcellular location is the nucleoplasm. It is found in the nucleus envelope. The protein localises to the cytoplasm. It localises to the cell cortex. The protein resides in the cytoskeleton. Its subcellular location is the spindle. It catalyses the reaction a 1,2-diacyl-sn-glycero-3-phosphocholine + H2O = a 1-acyl-sn-glycero-3-phosphocholine + a fatty acid + H(+). The enzyme catalyses a 1-O-alkyl-2-acyl-sn-glycero-3-phosphocholine + H2O = a 1-O-alkyl-sn-glycero-3-phosphocholine + a fatty acid + H(+). The catalysed reaction is 1,2-dihexadecanoyl-sn-glycero-3-phosphocholine + H2O = 1-hexadecanoyl-sn-glycero-3-phosphocholine + hexadecanoate + H(+). It carries out the reaction 1-hexadecanoyl-2-(9Z-octadecenoyl)-sn-glycero-3-phosphocholine + H2O = 1-hexadecanoyl-sn-glycero-3-phosphocholine + (9Z)-octadecenoate + H(+). It catalyses the reaction 1-hexadecanoyl-2-(9Z,12Z-octadecadienoyl)-sn-glycero-3-phosphocholine + H2O = (9Z,12Z)-octadecadienoate + 1-hexadecanoyl-sn-glycero-3-phosphocholine + H(+). The enzyme catalyses 1-hexadecanoyl-2-(5Z,8Z,11Z,14Z-eicosatetraenoyl)-sn-glycero-3-phosphocholine + H2O = 1-hexadecanoyl-sn-glycero-3-phosphocholine + (5Z,8Z,11Z,14Z)-eicosatetraenoate + H(+). The catalysed reaction is 1-O-hexadecyl-2-(5Z,8Z,11Z,14Z)-eicosatetraenoyl-sn-glycero-3-phosphocholine + H2O = 1-O-hexadecyl-sn-glycero-3-phosphocholine + (5Z,8Z,11Z,14Z)-eicosatetraenoate + H(+). It carries out the reaction 1-hexadecanoyl-2-(5Z,8Z,11Z,14Z-eicosatetraenoyl)-sn-glycero-3-phosphocholine + H2O = 2-(5Z,8Z,11Z,14Z)-eicosatetraenoyl-sn-glycero-3-phosphocholine + hexadecanoate + H(+). It catalyses the reaction a 1-acyl-sn-glycero-3-phosphocholine + H2O = sn-glycerol 3-phosphocholine + a fatty acid + H(+). The enzyme catalyses 1-hexadecanoyl-sn-glycero-3-phosphocholine + H2O = sn-glycerol 3-phosphocholine + hexadecanoate + H(+). The catalysed reaction is 2 1-hexadecanoyl-sn-glycero-3-phosphocholine = 1,2-dihexadecanoyl-sn-glycero-3-phosphocholine + sn-glycerol 3-phosphocholine. It carries out the reaction 1-hexadecanoyl-sn-glycero-3-phosphoethanolamine + 1-hexadecanoyl-sn-glycero-3-phosphocholine = 1,2-dihexadecanoyl-sn-glycero-3-phosphoethanolamine + sn-glycerol 3-phosphocholine. It catalyses the reaction 1-hexadecanoyl-sn-glycero-3-phosphoethanolamine + 1-hexadecanoyl-sn-glycero-3-phosphocholine = sn-glycero-3-phosphoethanolamine + 1,2-dihexadecanoyl-sn-glycero-3-phosphocholine. The enzyme catalyses 2 1-hexadecanoyl-sn-glycero-3-phosphoethanolamine = 1,2-dihexadecanoyl-sn-glycero-3-phosphoethanolamine + sn-glycero-3-phosphoethanolamine. The catalysed reaction is 1-O-hexadecyl-sn-glycero-3-phosphocholine + 1-hexadecanoyl-sn-glycero-3-phosphocholine = 1-O-hexadecyl-2-hexadecanoyl-sn-glycero-3-phosphocholine + sn-glycerol 3-phosphocholine. It carries out the reaction a 1-O-(1Z-alkenyl)-sn-glycero-3-phosphoethanolamine + 1-hexadecanoyl-sn-glycero-3-phosphocholine = 1-O-(1Z)-alkenyl-2-hexadecanoyl-sn-glycero-3-phosphoethanolamine + sn-glycerol 3-phosphocholine. It catalyses the reaction 1-O-hexadecyl-sn-glycero-3-phosphocholine + 1-hexadecanoyl-sn-glycero-3-phosphoethanolamine = 1-O-hexadecyl-2-hexadecanoyl-sn-glycero-3-phosphocholine + sn-glycero-3-phosphoethanolamine. The enzyme catalyses 1-octadecanoyl-2-(5Z,8Z,11Z,14Z)-eicosatetraenoyl-sn-glycero-3-phosphoethanolamine + 1-hexadecanoyl-sn-glycero-3-phosphocholine = 1-octadecanoyl-sn-glycero-3-phosphoethanolamine + 1-hexadecanoyl-2-(5Z,8Z,11Z,14Z-eicosatetraenoyl)-sn-glycero-3-phosphocholine. The catalysed reaction is 1-octadecanoyl-2-(5Z,8Z,11Z,14Z)-eicosatetraenoyl-sn-glycero-3-phosphoethanolamine + 1-O-hexadecyl-sn-glycero-3-phosphocholine = 1-octadecanoyl-sn-glycero-3-phosphoethanolamine + 1-O-hexadecyl-2-(5Z,8Z,11Z,14Z)-eicosatetraenoyl-sn-glycero-3-phosphocholine. It carries out the reaction 1-hexadecanoyl-2-(9Z,12Z-octadecadienoyl)-sn-glycero-3-phosphocholine + a 1-O-(1Z-alkenyl)-sn-glycero-3-phosphoethanolamine = 1-O-(1Z-alkenyl)-2-(9Z,12Z-octadecadienoyl)-sn-glycero-3-phosphoethanolamine + 1-hexadecanoyl-sn-glycero-3-phosphocholine. It catalyses the reaction 1-hexadecanoyl-2-(5Z,8Z,11Z,14Z-eicosatetraenoyl)-sn-glycero-3-phosphocholine + a 1-O-(1Z-alkenyl)-sn-glycero-3-phosphoethanolamine = 1-O-(1Z)-alkenyl-2-(5Z,8Z,11Z,14Z)-eicosatetraenoyl-sn-glycero-3-phosphoethanolamine + 1-hexadecanoyl-sn-glycero-3-phosphocholine. In terms of biological role, calcium-independent phospholipase, lysophospholipase and O-acyltransferase involved in phospholipid remodeling. Preferentially hydrolyzes the ester bond of the fatty acyl group attached at sn-2 position of phospholipids with choline and ethanolamine head groups, producing lysophospholipids that are used in deacylation-reacylation cycles. Transfers the sn-1 fatty acyl from one lysophospholipid molecule to the sn-2 position of another lysophospholipid to form diacyl, alkylacyl and alkenylacyl glycerophospholipids. Cleaves ester bonds but not alkyl or alkenyl ether bonds at the sn-1 position of lysophospholipids. Catalyzes sn-2 fatty acyl transfer from phospholipids to the sn-2 position of 1-O-alkyl or 1-O-alkenyl lysophospholipids with lower efficiency. The protein is Cytosolic phospholipase A2 gamma of Mus musculus (Mouse).